The following is a 54-amino-acid chain: Light-harvesting protein B-880 beta chain (54 aa).

Topologically, residues 1–20 (AEDRSSLSGVSDAEAKEFHA) are cytoplasmic. A bacteriochlorophyll-binding residues include His-19 and His-37. A helical membrane pass occupies residues 21–43 (LFVSSFMGFMVVAVLAHVLAWAW). The Periplasmic portion of the chain corresponds to 44-54 (RPWIPGPKGWA).

Belongs to the antenna complex beta subunit family. The core complex is formed by different alpha and beta chains, binding bacteriochlorophyll molecules, and arranged most probably in tetrameric structures disposed around the reaction center. The non-pigmented gamma chains may constitute additional components.

It is found in the cell inner membrane. Functionally, antenna complexes are light-harvesting systems, which transfer the excitation energy to the reaction centers. This Rhodoblastus acidophilus (Rhodopseudomonas acidophila) protein is Light-harvesting protein B-880 beta chain.